Here is a 762-residue protein sequence, read N- to C-terminus: Mitochondrial intermediate peptidase (762 aa).

The transit peptide at 1-28 (MQVRTLLTLGKKKVIGNRQCILSLYRKY) directs the protein to the mitochondrion. Residue H544 coordinates Zn(2+). Residue E545 is part of the active site. Positions 548 and 551 each coordinate Zn(2+).

Belongs to the peptidase M3 family. Zn(2+) serves as cofactor.

It localises to the mitochondrion matrix. It catalyses the reaction Release of an N-terminal octapeptide as second stage of processing of some proteins imported into the mitochondrion.. Functionally, cleaves proteins, imported into the mitochondrion, to their mature size. While most mitochondrial precursor proteins are processed to the mature form in one step by mitochondrial processing peptidase (MPP), the sequential cleavage by MIP of an octapeptide after initial processing by MPP is a required step for a subgroup of nuclear-encoded precursor proteins destined for the matrix or the inner membrane. The sequence is that of Mitochondrial intermediate peptidase (oct1) from Schizosaccharomyces pombe (strain 972 / ATCC 24843) (Fission yeast).